Consider the following 630-residue polypeptide: A-type voltage-gated potassium channel KCND2 (630 aa).

The Cytoplasmic segment spans residues 1–184 (MAAGVAAWLP…FENPHTSTMA (184 aa)). The interaction with KCNIP1, KCNIP2, and other family members stretch occupies residues 2–20 (AAGVAAWLPFARAAAIGWM). A Phosphothreonine modification is found at Thr-38. The interval 71 to 90 (ERDFFYHPETQQYFFDRDPD) is interaction with KCNIP1. 4 residues coordinate Zn(2+): His-105, Cys-111, Cys-132, and Cys-133. The helical transmembrane segment at 185-206 (LVFYYVTGFFIAVSVIANVVET) threads the bilayer. The Extracellular portion of the chain corresponds to 207–226 (VPCGSSPGHIKELPCGERYA). Residues 227 to 249 (VAFFCLDTACVMIFTVEYLLRLA) traverse the membrane as a helical segment. Over 250 to 256 (AAPSRYR) the chain is Cytoplasmic. The helical transmembrane segment at 257-281 (FVRSVMSIIDVVAILPYYIGLVMTD) threads the bilayer. At 282–287 (NEDVSG) the chain is on the extracellular side. The helical; Voltage-sensor transmembrane segment at 288–307 (AFVTLRVFRVFRIFKFSRHS) threads the bilayer. The Cytoplasmic segment spans residues 308 to 321 (QGLRILGYTLKSCA). The tract at residues 308–321 (QGLRILGYTLKSCA) is S4-S5 linker. The chain crosses the membrane as a helical span at residues 322–345 (SELGFLLFSLTMAIIIFATVMFYA). Over 346–357 (EKGSSASKFTSI) the chain is Extracellular. Positions 358–369 (PAAFWYTIVTMT) form an intramembrane region, helical. Residues Thr-370, Leu-371, Gly-372, and Tyr-373 each coordinate K(+). The Selectivity filter motif lies at 370–375 (TLGYGD). An intramembrane segment occupies 370–377 (TLGYGDMV). The Extracellular segment spans residues 378-380 (PKT). The chain crosses the membrane as a helical span at residues 381 to 403 (IAGKIFGSICSLSGVLVIALPVP). At 404-630 (VIVSNFSRIY…GGNIVRVSAL (227 aa)) the chain is on the cytoplasmic side. A required for dendritic targeting region spans residues 474–489 (FETQHHHLLHCLEKTT). Residues 474–630 (FETQHHHLLH…GGNIVRVSAL (157 aa)) are important for normal channel activation and inactivation, for interaction with KCNIP2, and probably other family members as well. Phosphoserine occurs at positions 548, 552, 572, and 575. The disordered stretch occupies residues 600–622 (IPTPPVTTPEGDDRPESPEYSGG). A phosphothreonine mark is found at Thr-602 and Thr-607. A Phosphoserine modification is found at Ser-616. The PDZ-binding motif lies at 627–630 (VSAL).

It belongs to the potassium channel family. D (Shal) (TC 1.A.1.2) subfamily. Kv4.2/KCND2 sub-subfamily. In terms of assembly, homotetramer or heterotetramer with KCND1 or KCND3. Associates with the regulatory subunits KCNIP2, KCNIP3 and KCNIP4. Interacts with the regulatory subunit KCNIP1; this interaction mediates the capture of both the N- and C-terminus of KCND2, preventing N-type inactivation and stabilizing the S6 conformation, thereby accelerating closed state inactivation and recovery. In vivo, probably exists as heteromeric complex containing variable proportions of KCND1, KCND2, KCND3, KCNIP1, KCNIP2, KCNIP3, KCNIP4, DPP6 and DPP10. The tetrameric channel can associate with up to four regulatory subunits, such as KCNIP2 or KCNIP4. Interaction with four KCNIP4 chains does not reduce interaction with DPP10. Interacts with DLG4 and NCS1/FREQ. Interacts with DLG1. Probably part of a complex consisting of KCNIP1, KCNIP2 isoform 3 and KCND2. Interacts with FLNA, FLNC and DPP10. Identified in a complex with cAMP-dependent protein kinase (PKA), CAV3, AKAP6 and KCND3 in cardiac myocytes. Interacts (via S1 and S2 helices) with DPP6; this interaction stabilizes the conformation of the S1-S2 helices and facilitates S4 conformational change, including S4 sliding up and down, thereby accelerating activation, inactivation, and recovery. In terms of processing, phosphorylation in response to MAPK activation is increased in stimulated dendrites. Interaction with KCNIP2 and DPP6 propomtes phosphorylation by PKA at Ser-552. Phosphorylation at Ser-552 has no effect on interaction with KCNIP3, but is required for the regulation of channel activity by KCNIP3. Phosphorylation at Ser-552 leads to KCND2 internalization. Phosphorylated by MAPK in response to signaling via the metabotropic glutamate receptor GRM5. Phosphorylation at Ser-616 is required for the down-regulation of neuronal A-type currents in response to signaling via GRM5.

It localises to the cell membrane. The protein resides in the cell projection. The protein localises to the dendrite. Its subcellular location is the synapse. It is found in the perikaryon. It localises to the postsynaptic cell membrane. The protein resides in the dendritic spine. The protein localises to the sarcolemma. Its subcellular location is the cell junction. It is found in the membrane. It localises to the caveola. The enzyme catalyses K(+)(in) = K(+)(out). Voltage-gated potassium channel that mediates transmembrane potassium transport in excitable membranes, primarily in the brain, but also in rodent heart. Mediates the major part of the dendritic A-type current I(SA) in brain neurons. This current is activated at membrane potentials that are below the threshold for action potentials. It regulates neuronal excitability, prolongs the latency before the first spike in a series of action potentials, regulates the frequency of repetitive action potential firing, shortens the duration of action potentials and regulates the back-propagation of action potentials from the neuronal cell body to the dendrites. Contributes to the regulation of the circadian rhythm of action potential firing in suprachiasmatic nucleus neurons, which regulates the circadian rhythm of locomotor activity. Functions downstream of the metabotropic glutamate receptor GRM5 and plays a role in neuronal excitability and in nociception mediated by activation of GRM5. Mediates the transient outward current I(to) in rodent heart left ventricle apex cells, but not in human heart, where this current is mediated by another family member. Forms tetrameric potassium-selective channels through which potassium ions pass in accordance with their electrochemical gradient. The channel alternates between opened and closed conformations in response to the voltage difference across the membrane. Can form functional homotetrameric channels and heterotetrameric channels that contain variable proportions of KCND2 and KCND3; channel properties depend on the type of pore-forming alpha subunits that are part of the channel. In vivo, membranes probably contain a mixture of heteromeric potassium channel complexes. Interaction with specific isoforms of the regulatory subunits KCNIP1, KCNIP2, KCNIP3 or KCNIP4 strongly increases expression at the cell surface and thereby increases channel activity; it modulates the kinetics of channel activation and inactivation, shifts the threshold for channel activation to more negative voltage values, shifts the threshold for inactivation to less negative voltages and accelerates recovery after inactivation. Likewise, interaction with DPP6 or DPP10 promotes expression at the cell membrane and regulates both channel characteristics and activity. Upon depolarization, the channel goes from a resting closed state (C state) to an activated but non-conducting state (C* state), from there, the channel may either inactivate (I state) or open (O state). The polypeptide is A-type voltage-gated potassium channel KCND2 (Mustela putorius furo (European domestic ferret)).